Consider the following 396-residue polypeptide: MSFDLRTRLDARRTAHLYRQRPLLQSPQGPHVIVDGQPLLAFCNNDYMGLANHPEVIAAWQAGAERWGVGGGASHLVIGHSTPHHELEEALAELTGRPRALLFSNGYMANLGAVTALVGQGDTVLEDRLNHASLLDAGLLSGARFSRYLHNDAGSLNARLEKAVGDTLVVTDGVFSMDGDIADLPALAQAAKAKGAWLMVDDAHGFGPLGANGAGIVEHFGLSMEDVPVLVGTLGKSFGTSGAFVAGSEELIETLIQFARPYIYTTSQPPALACATLKSLQLLRSEHWRREHLASLIGQFRRGAEQLGLQLMDSFTPIQPIMIGDAGRALRLSQLLRERGLLVTAIRPPTVPAGSARLRVTLSAAHSEADVQLLLEALEQCYPLLDASESTEPVHA.

Arginine 19 contacts substrate. 106 to 107 contributes to the pyridoxal 5'-phosphate binding site; the sequence is GY. A substrate-binding site is contributed by histidine 131. 3 residues coordinate pyridoxal 5'-phosphate: serine 176, histidine 204, and threonine 233. Lysine 236 bears the N6-(pyridoxal phosphate)lysine mark. Residue threonine 350 participates in substrate binding.

Belongs to the class-II pyridoxal-phosphate-dependent aminotransferase family. BioF subfamily. In terms of assembly, homodimer. Pyridoxal 5'-phosphate is required as a cofactor.

The enzyme catalyses 6-carboxyhexanoyl-[ACP] + L-alanine + H(+) = (8S)-8-amino-7-oxononanoate + holo-[ACP] + CO2. It participates in cofactor biosynthesis; biotin biosynthesis. Its function is as follows. Catalyzes the decarboxylative condensation of pimeloyl-[acyl-carrier protein] and L-alanine to produce 8-amino-7-oxononanoate (AON), [acyl-carrier protein], and carbon dioxide. In Pseudomonas syringae pv. tomato (strain ATCC BAA-871 / DC3000), this protein is 8-amino-7-oxononanoate synthase.